Here is a 76-residue protein sequence, read N- to C-terminus: UPF0235 protein MMAR_2910 (76 aa).

It belongs to the UPF0235 family.

The sequence is that of UPF0235 protein MMAR_2910 from Mycobacterium marinum (strain ATCC BAA-535 / M).